A 385-amino-acid chain; its full sequence is Glucans biosynthesis protein C (385 aa).

10 helical membrane passes run 17 to 37, 60 to 80, 91 to 111, 137 to 157, 173 to 193, 212 to 232, 245 to 262, 274 to 294, 311 to 331, and 338 to 358; these read AWLM…SHTW, MQVF…RYPL, VGIP…IMLQ, ISHL…VWIF, KFSM…YAVI, FIVM…LAFI, RGST…LLNQ, TESV…FSFG, ASLF…AYIT, and WLGF…LYEI.

Belongs to the acyltransferase 3 family. OpgC subfamily.

It is found in the cell membrane. The protein operates within glycan metabolism; osmoregulated periplasmic glucan (OPG) biosynthesis. Necessary for the succinyl substitution of periplasmic glucans. Could catalyze the transfer of succinyl residues from the cytoplasmic side of the membrane to the nascent glucan backbones on the periplasmic side of the membrane. This is Glucans biosynthesis protein C from Escherichia coli O81 (strain ED1a).